The following is a 198-amino-acid chain: 7-methyl-GTP pyrophosphatase (198 aa).

Catalysis depends on aspartate 69, which acts as the Proton acceptor.

It belongs to the Maf family. YceF subfamily. The cofactor is a divalent metal cation.

Its subcellular location is the cytoplasm. The catalysed reaction is N(7)-methyl-GTP + H2O = N(7)-methyl-GMP + diphosphate + H(+). Its function is as follows. Nucleoside triphosphate pyrophosphatase that hydrolyzes 7-methyl-GTP (m(7)GTP). May have a dual role in cell division arrest and in preventing the incorporation of modified nucleotides into cellular nucleic acids. In Yersinia pestis bv. Antiqua (strain Antiqua), this protein is 7-methyl-GTP pyrophosphatase.